Consider the following 131-residue polypeptide: Capsid protein (131 aa).

The Ca(2+) site is built by Gln2 and Tyr131.

Belongs to the Leviviricetes capsid protein family. Homodimer. The capsid proteins form dimers that assemble by group of 5. Twelve such pentamers are linked together with free dimers. The homodimers binds to the viral RNA via an operator hairpin, but also to many other RNA sequences in the viral genome; this interaction probably shifts the virus from the replicative to the assembly phase and ensures specific encapsidation of the viral genome.

It localises to the virion. Capsid protein self-assembles to form an icosahedral capsid with a T=3 symmetry, about 26 nm in diameter, and consisting of 89 capsid proteins dimers (178 capsid proteins). Involved in viral genome encapsidation through the interaction between a capsid protein dimer and the multiple packaging signals present in the RNA genome. The capsid also contains 1 copy of the A2 maturation protein. Its function is as follows. Acts as a translational repressor of viral replicase synthesis late in infection. This latter function is the result of capsid protein interaction with an RNA hairpin which contains the replicase ribosome-binding site. The protein is Capsid protein of Pseudomonas phage PRR1 (Bacteriophage PRR1).